The primary structure comprises 92 residues: Putative defensin-like protein 225 (92 aa).

A signal peptide spans 1–26 (MKYGVLFMVSCGVMFLILSHVEEVEA). Cystine bridges form between cysteine 32–cysteine 92, cysteine 42–cysteine 70, and cysteine 68–cysteine 88.

Belongs to the DEFL family.

The protein resides in the secreted. The protein is Putative defensin-like protein 225 (SCRL1) of Arabidopsis thaliana (Mouse-ear cress).